Consider the following 118-residue polypeptide: Ig heavy chain V region AC38 205.12 (118 aa).

The segment at 1–98 is v segment; sequence EVQLQQSGPE…EDSAVYYCAR (98 aa). Residues Cys-22 and Cys-96 are joined by a disulfide bond. The d segment stretch occupies residues 99-104; sequence GYGYDP. The interval 105-118 is j segment; it reads FDVWGTGTTVTVSS.

This chain is Ig heavy chain V region AC38 205.12, found in Mus musculus (Mouse).